We begin with the raw amino-acid sequence, 388 residues long: Ovalbumin-related protein Y (388 aa).

The cysteines at positions 74 and 121 are disulfide-linked. N-linked (GlcNAc...) asparagine glycans are attached at residues asparagine 95, asparagine 215, asparagine 293, and asparagine 312.

It belongs to the serpin family. Ov-serpin subfamily. In terms of processing, N-glycosylated on at least two Asn residues by ovomucoid type carbohydrate units. Post-translationally, the N-terminus is blocked. As to expression, major protein of egg white. Expressed in the magnum of the oviduct (at protein level).

Its subcellular location is the secreted. This chain is Ovalbumin-related protein Y (SERPINB14B), found in Gallus gallus (Chicken).